Reading from the N-terminus, the 234-residue chain is UPF0502 protein Bphy_5360 (234 aa).

The protein belongs to the UPF0502 family.

The polypeptide is UPF0502 protein Bphy_5360 (Paraburkholderia phymatum (strain DSM 17167 / CIP 108236 / LMG 21445 / STM815) (Burkholderia phymatum)).